Consider the following 172-residue polypeptide: Large ribosomal subunit protein uL10 (172 aa).

It belongs to the universal ribosomal protein uL10 family. As to quaternary structure, part of the ribosomal stalk of the 50S ribosomal subunit. The N-terminus interacts with L11 and the large rRNA to form the base of the stalk. The C-terminus forms an elongated spine to which L12 dimers bind in a sequential fashion forming a multimeric L10(L12)X complex.

Its function is as follows. Forms part of the ribosomal stalk, playing a central role in the interaction of the ribosome with GTP-bound translation factors. The polypeptide is Large ribosomal subunit protein uL10 (Rhizobium meliloti (strain 1021) (Ensifer meliloti)).